Consider the following 490-residue polypeptide: Cytochrome P450 2C7 (490 aa).

A Dimethylated arginine modification is found at arginine 144. Residue cysteine 435 participates in heme binding.

It belongs to the cytochrome P450 family. It depends on heme as a cofactor.

The protein resides in the endoplasmic reticulum membrane. Its subcellular location is the microsome membrane. It catalyses the reaction an organic molecule + reduced [NADPH--hemoprotein reductase] + O2 = an alcohol + oxidized [NADPH--hemoprotein reductase] + H2O + H(+). Its function is as follows. Cytochromes P450 are a group of heme-thiolate monooxygenases. In liver microsomes, this enzyme is involved in an NADPH-dependent electron transport pathway. It oxidizes a variety of structurally unrelated compounds, including steroids, fatty acids, and xenobiotics. The polypeptide is Cytochrome P450 2C7 (Cyp2c7) (Rattus norvegicus (Rat)).